Reading from the N-terminus, the 203-residue chain is bMERB domain-containing protein 1 (203 aa).

Residues 3–149 enclose the bMERB domain; that stretch reads LKQSLSVHLE…EQEEDKEMAD (147 aa). A disordered region spans residues 161–184; it reads VTKTSASSRAEKKAEPPPSKPTVA.

The sequence is that of bMERB domain-containing protein 1 (Bmerb1) from Mus musculus (Mouse).